The sequence spans 127 residues: Holo-[acyl-carrier-protein] synthase (127 aa).

Mg(2+)-binding residues include aspartate 8 and glutamate 56.

The protein belongs to the P-Pant transferase superfamily. AcpS family. The cofactor is Mg(2+).

The protein resides in the cytoplasm. The enzyme catalyses apo-[ACP] + CoA = holo-[ACP] + adenosine 3',5'-bisphosphate + H(+). Its function is as follows. Transfers the 4'-phosphopantetheine moiety from coenzyme A to a Ser of acyl-carrier-protein. This is Holo-[acyl-carrier-protein] synthase from Deinococcus deserti (strain DSM 17065 / CIP 109153 / LMG 22923 / VCD115).